The primary structure comprises 258 residues: 3-deoxy-manno-octulosonate cytidylyltransferase (258 aa).

The protein belongs to the KdsB family.

Its subcellular location is the cytoplasm. It carries out the reaction 3-deoxy-alpha-D-manno-oct-2-ulosonate + CTP = CMP-3-deoxy-beta-D-manno-octulosonate + diphosphate. It participates in nucleotide-sugar biosynthesis; CMP-3-deoxy-D-manno-octulosonate biosynthesis; CMP-3-deoxy-D-manno-octulosonate from 3-deoxy-D-manno-octulosonate and CTP: step 1/1. The protein operates within bacterial outer membrane biogenesis; lipopolysaccharide biosynthesis. In terms of biological role, activates KDO (a required 8-carbon sugar) for incorporation into bacterial lipopolysaccharide in Gram-negative bacteria. The protein is 3-deoxy-manno-octulosonate cytidylyltransferase of Pasteurella multocida (strain Pm70).